A 1071-amino-acid polypeptide reads, in one-letter code: Serine/threonine-protein phosphatase 6 regulatory ankyrin repeat subunit C (1071 aa).

28 ANK repeats span residues 7–36 (SDQPPLVQAIFNRNADEVKLFLHKKDEVNA), 40–69 (ERRTPLHAAAWLGDVHIMDLLISAGANVNA), 73–102 (VWLTPLHRAAASRNERAVGLLLRKGADVTA), 106–135 (YWQTPLHIAAANRATRCVETLLPHVSSLNM), 139–168 (TGRAPLHHAAQSGYQEMVKLLLNKGANLSA), 172–201 (KDRQPIHWAAYLGHLEVVKLLVSQGSDKSC), 205–234 (RGYTPLHAAAASGHVDVVKYLLRNGAEIDE), 238–267 (FGNTALHVACYTGQEAVANELVNRGANVNQ), 271–301 (RGYTPLHLAAVSTNGALCLELLVNNGADVNM), 305–334 (EGKSPLHMAAIHGRFTRSQILIQNGGEIDC), 338–367 (YGNTPLHVAAKYGHELLISTLMTNGADTAR), 371–400 (HGMFPLHLAVLYGSSDCCRKLLSSGQLYSI), 422–451 (FGRTCLHAAASGGNIECLNLLLSSGADMNK), 455–484 (FGRTPLHYAAANGRYQCVVVLVGAGAEVNE), 488–539 (SGCT…DPCL), 543–573 (KGYSAVHYAAAHGNKQNLELLLEMCFNTLGD), 578–607 (GSISPLHLAVESGHWECVTVLIESGVCVDV), 611–640 (VGRSVLYLASQRGHSRCVELLLSQSASCLL), 645–674 (SKWGPLHVAAANGHSECLRMLLCSEGGADL), 681–710 (EGQTPLMLAVLGGHTDCVHLLLERGACPDM), 714–743 (RGRTALHRGAVMGREDCLTALLSHNVSVLS), 747–776 (QGRSALHLAASCGHADILSNLLSAADHSQP), 784–814 (HGYTPAHWAAYHGHEDCLEVLLELKPCSIQE), 816–845 (NPFTPLHCALINGHSGSAELLLESSVCNSL), 852–881 (KGRTPLHAAAVAEDVAGLQLVLRQGADIDA), 885–915 (SGRSALMVAADYGQSGAVALLLHRAKADLSL), 919–951 (NKNTALHLACSKAHEMCAMLILKEIHNPILINA), and 955–984 (MLQMPLHIAARNGLATVVQALLNRGATVLA).

In terms of assembly, protein phosphatase 6 (PP6) holoenzyme is proposed to be a heterotrimeric complex formed by the catalytic subunit, a SAPS domain-containing subunit (PP6R) and an ankyrin repeat-domain containing regulatory subunit (ARS).

In terms of biological role, putative regulatory subunit of protein phosphatase 6 (PP6) that may be involved in the recognition of phosphoprotein substrates. The protein is Serine/threonine-protein phosphatase 6 regulatory ankyrin repeat subunit C (ankrd52) of Danio rerio (Zebrafish).